An 841-amino-acid chain; its full sequence is pre-rRNA 2'-O-ribose RNA methyltransferase FTSJ3 (841 aa).

5 residues coordinate S-adenosyl-L-methionine: G56, W58, D76, D92, and D117. K157 serves as the catalytic Proton acceptor. Residues 332 to 366 (ISLSSGEEDEGNEEDSTAGTTEQPSKEEEEEEQLN) are disordered. S333, S335, S336, S347, and S356 each carry phosphoserine. A compositionally biased stretch (acidic residues) spans 337–347 (GEEDEGNEEDS). Positions 356 to 404 (SKEEEEEEQLNQTLAEMKAQEVAELKRKKKKLLREQRKQRERVELKMDL) form a coiled coil. K357 is covalently cross-linked (Glycyl lysine isopeptide (Lys-Gly) (interchain with G-Cter in SUMO2)). Citrulline is present on R389. Residues 454–482 (VSDVEDDGDDTSLDSDLDPEELAGVRGHQ) form a disordered region. Residues 456-474 (DVEDDGDDTSLDSDLDPEE) are compositionally biased toward acidic residues. Phosphoserine is present on S547. At T567 the chain carries Phosphothreonine. A Glycyl lysine isopeptide (Lys-Gly) (interchain with G-Cter in SUMO2) cross-link involves residue K573. The residue at position 578 (S578) is a Phosphoserine. A disordered region spans residues 579–654 (PLYQDEAPKG…IVPIEDPAKH (76 aa)). Residue K637 forms a Glycyl lysine isopeptide (Lys-Gly) (interchain with G-Cter in SUMO2) linkage. S638 is modified (phosphoserine). K653 participates in a covalent cross-link: Glycyl lysine isopeptide (Lys-Gly) (interchain with G-Cter in SUMO2). Position 670 is a phosphoserine (S670). K672 participates in a covalent cross-link: Glycyl lysine isopeptide (Lys-Gly) (interchain with G-Cter in SUMO2). S682 carries the phosphoserine modification. K704 participates in a covalent cross-link: Glycyl lysine isopeptide (Lys-Gly) (interchain with G-Cter in SUMO2). Positions 733 to 771 (IKKVAEAKARKKRRMLKRLEQTRKKAEAVVNTVDISERE) form a coiled coil. R777 carries the citrulline modification. Residues 805–815 (VRRPAGVRGHF) show a composition bias toward basic residues. The interval 805–841 (VRRPAGVRGHFKVVDSRMKKDQRAQQRKEQKKKHKRK) is disordered. A compositionally biased stretch (basic and acidic residues) spans 816–832 (KVVDSRMKKDQRAQQRK).

This sequence belongs to the class I-like SAM-binding methyltransferase superfamily. RNA methyltransferase RlmE family. SPB1 subfamily. As to quaternary structure, interacts with NIP7. Post-translationally, citrullinated by PADI4.

The protein localises to the nucleus. The protein resides in the nucleolus. The enzyme catalyses a ribonucleotide in rRNA + S-adenosyl-L-methionine = a 2'-O-methylribonucleotide in rRNA + S-adenosyl-L-homocysteine + H(+). RNA 2'-O-methyltransferase involved in the processing of the 34S pre-rRNA to 18S rRNA and in 40S ribosomal subunit formation. The chain is pre-rRNA 2'-O-ribose RNA methyltransferase FTSJ3 from Pongo abelii (Sumatran orangutan).